The chain runs to 558 residues: MPAKLNSPSRYHGIYNAPHRAFLRSVGLTDEEIGKPLVAIATAWSEAGPCNFHTLALARVAKEGTKEAGLSPLAFPTMVVNDNIGMGSEGMRYSLVSRDLIADMVEAQFNAHAFDGLVGIGGCDKTTPGILMAMARLNVPSIYIYGGSAEPGYFMGKRLTIEDVHEAIGAYLAKRITENELYEIEKRAHPTLGTCSGLFTANTMGSMSEALGMALPGSASPTATSSRRVMYVRETGKALGSLIENGIKSRDILTFEAFENAITTLMAMGGSTNAVLHLLAIAYEAGVKLTLDDFNRISKRTPYIASMKPGGDYVMADLDEVGGVPVVLKKLLDAGLLHGDVLTVTGKTMKQNLEQYKYPNVPHSHIVRDVKNPIKPRGGIVILKGSLAPEGAVIKVAATNVVKFEGKAKVYNSEDDAFKGVQSGEVREGEVVIIRYEGPKGAPGMPEMLRVTAAIMGAGLNNVALVTDGRFSGATRGPMVGHVAPEAMVGGPIAIVEDGDTIVIDVESERLDLKLSEEEIKNRLKRWSPPSPRYKSGLLAKYASLVSQASMGAVTRPA.

Cysteine 50 contributes to the [2Fe-2S] cluster binding site. Aspartate 82 serves as a coordination point for Mg(2+). Cysteine 123 is a [2Fe-2S] cluster binding site. Aspartate 124 and lysine 125 together coordinate Mg(2+). Lysine 125 carries the N6-carboxylysine modification. [2Fe-2S] cluster is bound at residue cysteine 195. Residue glutamate 447 participates in Mg(2+) binding. The active-site Proton acceptor is the serine 472.

This sequence belongs to the IlvD/Edd family. As to quaternary structure, homodimer. It depends on [2Fe-2S] cluster as a cofactor. Mg(2+) is required as a cofactor.

The enzyme catalyses (2R)-2,3-dihydroxy-3-methylbutanoate = 3-methyl-2-oxobutanoate + H2O. The catalysed reaction is (2R,3R)-2,3-dihydroxy-3-methylpentanoate = (S)-3-methyl-2-oxopentanoate + H2O. The protein operates within amino-acid biosynthesis; L-isoleucine biosynthesis; L-isoleucine from 2-oxobutanoate: step 3/4. It participates in amino-acid biosynthesis; L-valine biosynthesis; L-valine from pyruvate: step 3/4. In terms of biological role, functions in the biosynthesis of branched-chain amino acids. Catalyzes the dehydration of (2R,3R)-2,3-dihydroxy-3-methylpentanoate (2,3-dihydroxy-3-methylvalerate) into 2-oxo-3-methylpentanoate (2-oxo-3-methylvalerate) and of (2R)-2,3-dihydroxy-3-methylbutanoate (2,3-dihydroxyisovalerate) into 2-oxo-3-methylbutanoate (2-oxoisovalerate), the penultimate precursor to L-isoleucine and L-valine, respectively. This is Dihydroxy-acid dehydratase from Saccharolobus islandicus (strain M.16.27) (Sulfolobus islandicus).